The sequence spans 92 residues: Neuropeptide ShK-like2 (92 aa).

The first 23 residues, 1–23 (MTTIRCVLFAVLLFAYCALLIKA), serve as a signal peptide directing secretion. Positions 24 to 51 (RSIDAEAEKTWQEEETKTVAEKSPLKKR) are excised as a propeptide. Disulfide bonds link C53–C92, C61–C85, and C70–C89.

In terms of tissue distribution, transcripts are first expressed mostly in the endoderm (with rare ectodermal cells) in the late planulae. They are mostly expressed in endodermal ganglion cells in the body column and tentacles in primary polyps, as well as in a small number of ectodermal sensory neurons in tentacles and body wall. They are not expressed in nematocytes. As to expression, transcripts are predominantly expressed in ectodermal sensory neurons in early and late planulae. They are expressed in endodermal ganglion cells in the body column and tentacles in primary polyps, as well as in a small number of ectodermal neurons in pharynx. They are not expressed in nematocytes.

Its function is as follows. In vivo, this neuropeptide induces contraction paralysis followed by death (within 2 hours) on 4 zebrafish larvae on the 15 tested. Also induces body contraction in Nematostella 11-dpf polyps. This chain is Neuropeptide ShK-like2, found in Nematostella vectensis (Starlet sea anemone).